The following is a 211-amino-acid chain: Protein-L-isoaspartate O-methyltransferase (211 aa).

Serine 60 is a catalytic residue.

This sequence belongs to the methyltransferase superfamily. L-isoaspartyl/D-aspartyl protein methyltransferase family.

It localises to the cytoplasm. It carries out the reaction [protein]-L-isoaspartate + S-adenosyl-L-methionine = [protein]-L-isoaspartate alpha-methyl ester + S-adenosyl-L-homocysteine. In terms of biological role, catalyzes the methyl esterification of L-isoaspartyl residues in peptides and proteins that result from spontaneous decomposition of normal L-aspartyl and L-asparaginyl residues. It plays a role in the repair and/or degradation of damaged proteins. The protein is Protein-L-isoaspartate O-methyltransferase of Ectopseudomonas mendocina (strain ymp) (Pseudomonas mendocina).